The sequence spans 697 residues: uncharacterized protein (697 aa).

Residues 24-51 (CIRCRQKKIKCSGEKPSCQACSNNKVEC) constitute a DNA-binding region (zn(2)-C6 fungal-type). Residues 500–520 (YIMSPFVGFSILTAATIHMLL) form a helical membrane-spanning segment.

It localises to the nucleus membrane. This is an uncharacterized protein from Schizosaccharomyces pombe (strain 972 / ATCC 24843) (Fission yeast).